We begin with the raw amino-acid sequence, 1294 residues long: Leucine-rich repeat receptor protein kinase MSP1 (1294 aa).

An N-terminal signal peptide occupies residues 1 to 22 (MVSNSFWLFILLVSFIPISAWA). LRR repeat units lie at residues 88-112 (FQSL…LGNL), 113-136 (QNLQ…LYNL), 138-160 (MLKE…IAQL), 161-184 (QHLT…LGSL), and 186-207 (NLEL…TFGN). 3 N-linked (GlcNAc...) asparagine glycosylation sites follow: Asn198, Asn207, and Asn220. LRR repeat units follow at residues 232 to 256 (LTNL…IGQL), 258 to 280 (NLEL…IGSL), 282 to 304 (QLKL…ISGL), 305 to 328 (SSLT…MGEL), 330 to 352 (NLTQ…LGNC), 353 to 376 (KKLT…FADL), 378 to 400 (AIVS…IQKW), 401 to 422 (KNAR…VLPL), 423 to 446 (QHLL…ICQA), 447 to 469 (NSLH…AFKG), 471 to 493 (TNLT…YLAE), 494 to 517 (LPLV…LWES), 519 to 541 (TLLE…IGKL), 542 to 565 (SVLQ…VGDL), 566 to 589 (RNLT…LFNC), 591 to 613 (KLAT…ISHL), 614 to 637 (TLLD…ICVG), 649 to 673 (LQHH…IKNC), 675 to 697 (MVMV…LGEL), 698 to 721 (TNLT…SGPL), 722 to 745 (VQLQ…IGQI), 746 to 770 (LPKI…LLCN), and 772 to 794 (YLNH…CPDG). Residues Asn330 and Asn359 are each glycosylated (N-linked (GlcNAc...) asparagine). Asn458 and Asn472 each carry an N-linked (GlcNAc...) asparagine glycan. Residues Asn567, Asn570, and Asn601 are each glycosylated (N-linked (GlcNAc...) asparagine). N-linked (GlcNAc...) asparagine glycans are attached at residues Asn687, Asn699, and Asn704. N-linked (GlcNAc...) asparagine glycans are attached at residues Asn805, Asn821, and Asn832. 2 LRR repeats span residues 822 to 846 (FTQL…LSDL) and 848 to 870 (SLNY…ICNI). A helical transmembrane segment spans residues 917-937 (ITICAFTFVIIIVLVLLAVYL). Residues 1002-1282 (FSKVHIIGDG…KGLKMTHGME (281 aa)) form the Protein kinase domain. Residues 1008–1016 (IGDGGFGTV) and Lys1030 contribute to the ATP site. Asp1129 (proton acceptor) is an active-site residue.

This sequence belongs to the protein kinase superfamily. Ser/Thr protein kinase family. As to quaternary structure, interacts with TDL1A. In terms of tissue distribution, expressed in anthers and ovules during meiosis.

The protein localises to the cell membrane. The catalysed reaction is L-seryl-[protein] + ATP = O-phospho-L-seryl-[protein] + ADP + H(+). The enzyme catalyses L-threonyl-[protein] + ATP = O-phospho-L-threonyl-[protein] + ADP + H(+). In terms of biological role, receptor-like kinase that plays important roles in restricting the number of cells entering into male and female sporogenesis. Involved in cell specification during anther development and initiation of anther wall formation. This is Leucine-rich repeat receptor protein kinase MSP1 from Oryza sativa subsp. japonica (Rice).